The sequence spans 380 residues: Probable dual-specificity RNA methyltransferase RlmN (380 aa).

Glu112 (proton acceptor) is an active-site residue. Positions Tyr118–Glu358 constitute a Radical SAM core domain. The cysteines at positions 125 and 363 are disulfide-linked. [4Fe-4S] cluster-binding residues include Cys132, Cys136, and Cys139. S-adenosyl-L-methionine contacts are provided by residues Gly187–Glu188, Ser221, Ser244–His246, and Asn320. The active-site S-methylcysteine intermediate is Cys363.

It belongs to the radical SAM superfamily. RlmN family. [4Fe-4S] cluster is required as a cofactor.

The protein localises to the cytoplasm. The enzyme catalyses adenosine(2503) in 23S rRNA + 2 reduced [2Fe-2S]-[ferredoxin] + 2 S-adenosyl-L-methionine = 2-methyladenosine(2503) in 23S rRNA + 5'-deoxyadenosine + L-methionine + 2 oxidized [2Fe-2S]-[ferredoxin] + S-adenosyl-L-homocysteine. The catalysed reaction is adenosine(37) in tRNA + 2 reduced [2Fe-2S]-[ferredoxin] + 2 S-adenosyl-L-methionine = 2-methyladenosine(37) in tRNA + 5'-deoxyadenosine + L-methionine + 2 oxidized [2Fe-2S]-[ferredoxin] + S-adenosyl-L-homocysteine. In terms of biological role, specifically methylates position 2 of adenine 2503 in 23S rRNA and position 2 of adenine 37 in tRNAs. In Salinispora arenicola (strain CNS-205), this protein is Probable dual-specificity RNA methyltransferase RlmN.